The following is a 343-amino-acid chain: Zinc finger CCCH domain-containing protein 1 (343 aa).

The disordered stretch occupies residues 1–102; that stretch reads MSDSGEPKPS…PERSVFHYDS (102 aa). Low complexity predominate over residues 7-25; the sequence is PKPSQQEEPLPQPAAQETQ. The segment covering 35-44 has biased composition (basic residues); the sequence is KPTKSKNIRK. Residues 79 to 91 are compositionally biased toward low complexity; the sequence is SSGPSKSSTTTSG. The segment at 200–228 adopts a C3H1-type zinc-finger fold; the sequence is DYQPDICKDYKETGYCGYGDSCKFLHDRG. Positions 249–268 are disordered; the sequence is RNKAMGVEDEDDEADKDSDE. Residues 255–268 are compositionally biased toward acidic residues; the sequence is VEDEDDEADKDSDE. The RING-type zinc finger occupies 277–315; sequence CFICREPFVDPVVTKCKHYFCEHCALKHHTKNKKCFVCN.

In Arabidopsis thaliana (Mouse-ear cress), this protein is Zinc finger CCCH domain-containing protein 1.